The primary structure comprises 131 residues: Large ribosomal subunit protein bL17 (131 aa).

This sequence belongs to the bacterial ribosomal protein bL17 family. In terms of assembly, part of the 50S ribosomal subunit. Contacts protein L32.

In Shewanella amazonensis (strain ATCC BAA-1098 / SB2B), this protein is Large ribosomal subunit protein bL17.